We begin with the raw amino-acid sequence, 229 residues long: V-type proton ATPase subunit E (229 aa).

The protein belongs to the V-ATPase E subunit family. In terms of assembly, V-ATPase is a heteromultimeric enzyme composed of a peripheral catalytic V1 complex (components A to H) attached to an integral membrane V0 proton pore complex (components: a, c, c', c'' and d).

Functionally, subunit of the peripheral V1 complex of vacuolar ATPase essential for assembly or catalytic function. V-ATPase is responsible for acidifying a variety of intracellular compartments in eukaryotic cells. The sequence is that of V-type proton ATPase subunit E (VATE) from Spinacia oleracea (Spinach).